A 181-amino-acid polypeptide reads, in one-letter code: CDP-diacylglycerol--glycerol-3-phosphate 3-phosphatidyltransferase (181 aa).

A run of 4 helical transmembrane segments spans residues 8 to 28 (PNYL…TFYI), 35 to 55 (MLGA…GYIA), 64 to 84 (FGKM…IIML), and 148 to 168 (IIYL…LTII).

Belongs to the CDP-alcohol phosphatidyltransferase class-I family.

It localises to the cell membrane. It carries out the reaction a CDP-1,2-diacyl-sn-glycerol + sn-glycerol 3-phosphate = a 1,2-diacyl-sn-glycero-3-phospho-(1'-sn-glycero-3'-phosphate) + CMP + H(+). It participates in phospholipid metabolism; phosphatidylglycerol biosynthesis; phosphatidylglycerol from CDP-diacylglycerol: step 1/2. This protein catalyzes the committed step to the synthesis of the acidic phospholipids. The polypeptide is CDP-diacylglycerol--glycerol-3-phosphate 3-phosphatidyltransferase (pgsA) (Rickettsia bellii (strain RML369-C)).